The chain runs to 354 residues: Biotin synthase (354 aa).

A Radical SAM core domain is found at 41-265 (NEVQISRLLS…IMPHSRVRLS (225 aa)). 3 residues coordinate [4Fe-4S] cluster: cysteine 56, cysteine 60, and cysteine 63. [2Fe-2S] cluster contacts are provided by cysteine 100, cysteine 131, cysteine 191, and arginine 263.

Belongs to the radical SAM superfamily. Biotin synthase family. As to quaternary structure, homodimer. It depends on [4Fe-4S] cluster as a cofactor. The cofactor is [2Fe-2S] cluster.

The enzyme catalyses (4R,5S)-dethiobiotin + (sulfur carrier)-SH + 2 reduced [2Fe-2S]-[ferredoxin] + 2 S-adenosyl-L-methionine = (sulfur carrier)-H + biotin + 2 5'-deoxyadenosine + 2 L-methionine + 2 oxidized [2Fe-2S]-[ferredoxin]. Its pathway is cofactor biosynthesis; biotin biosynthesis; biotin from 7,8-diaminononanoate: step 2/2. Functionally, catalyzes the conversion of dethiobiotin (DTB) to biotin by the insertion of a sulfur atom into dethiobiotin via a radical-based mechanism. The protein is Biotin synthase of Shewanella sediminis (strain HAW-EB3).